The chain runs to 779 residues: Abnormal cell migration protein 10 (779 aa).

Residues 78–97 (NELEADTEEDIAETADDEES) are compositionally biased toward acidic residues. 3 disordered regions span residues 78-105 (NELE…EKTE), 189-217 (SSSR…PQQP), and 242-302 (AASS…NAEE). Polar residues predominate over residues 189–200 (SSSRENVKSIST). The span at 242–254 (AASSCSSPDGDSA) shows a compositional bias: low complexity. A compositionally biased stretch (polar residues) spans 256–293 (GDSSSTESSNNRCRNSAFSSNDSCRDSLNTPSPTQVSP). One can recognise a Ras-associating domain in the interval 317-407 (EAKVTKIFVK…NKLYFMRRPD (91 aa)). Positions 456–566 (PPEMEGFLYL…WLVALRIAKN (111 aa)) constitute a PH domain. 2 stretches are compositionally biased toward polar residues: residues 645–660 (SFSV…SRTS) and 688–698 (RASTSSPTIPQ). Residues 645–763 (SFSVNSCQQS…SPMAPAKNDL (119 aa)) are disordered. A compositionally biased stretch (pro residues) spans 708–729 (PAPPPVASVMRMPPPVTPPKPC).

This sequence belongs to the MRL family. In terms of assembly, may interact (via Ras-associating and PH domains) with ced-10 (GTP-bound form).

It is found in the perikaryon. Required cell non-autonomously for proper development of the excretory canals and for the long-range anterior-posterior migrations of embryonic neurons CAN, ALM and HSN. Plays a role, probably downstream of ced-10/rac1, in orientating axonal growth of HSN and AVM neurons in response to guidance cues such as slt-1. May regulate growth cone polarization by promoting asymmetric F-actin assembly. May be involved in signal transduction during cell migration. The chain is Abnormal cell migration protein 10 from Caenorhabditis elegans.